Reading from the N-terminus, the 506-residue chain is Probable alpha-L-arabinofuranosidase B (506 aa).

Residues 1-26 form the signal peptide; sequence MLLPRGFNRAVVTALGVVGTGTLVAA. Residues 27–343 form a catalytic region; it reads GPCDIYSSGG…ANIVAAKYAV (317 aa). 3 disulfide bridges follow: Cys29–Cys39, Cys89–Cys94, and Cys184–Cys185. Residue Asp227 participates in substrate binding. The active-site Nucleophile is Glu229. Position 230 (Asn230) interacts with substrate. Asn285 carries N-linked (GlcNAc...) asparagine glycosylation. Gly304 provides a ligand contact to substrate. The active-site Proton donor is Asp305. Residues 344 to 506 are ABD; it reads APLTSGPSLT…VSWVVSTSFA (163 aa). N-linked (GlcNAc...) asparagine glycosylation is present at Asn375. The cysteines at positions 409 and 447 are disulfide-linked. Residues His424, Phe427, Asp443, His471, Leu476, and Asp496 each contribute to the substrate site.

It belongs to the glycosyl hydrolase 54 family.

It localises to the secreted. The catalysed reaction is Hydrolysis of terminal non-reducing alpha-L-arabinofuranoside residues in alpha-L-arabinosides.. It participates in glycan metabolism; L-arabinan degradation. In terms of biological role, alpha-L-arabinofuranosidase involved in the degradation of arabinoxylan, a major component of plant hemicellulose. Able to hydrolyze 1,5-, 1,3- and 1,2-alpha-linkages not only in L-arabinofuranosyl oligosaccharides, but also in polysaccharides containing terminal non-reducing L-arabinofuranoses in side chains, like L-arabinan, arabinogalactan and arabinoxylan. In Aspergillus terreus (strain NIH 2624 / FGSC A1156), this protein is Probable alpha-L-arabinofuranosidase B (abfB).